The chain runs to 227 residues: 7-cyano-7-deazaguanine synthase (227 aa).

11 to 21 (VSGGMDSAALL) serves as a coordination point for ATP. The Zn(2+) site is built by Cys-192, Cys-200, Cys-203, and Cys-206.

Belongs to the QueC family. Zn(2+) serves as cofactor.

It catalyses the reaction 7-carboxy-7-deazaguanine + NH4(+) + ATP = 7-cyano-7-deazaguanine + ADP + phosphate + H2O + H(+). Its pathway is purine metabolism; 7-cyano-7-deazaguanine biosynthesis. Catalyzes the ATP-dependent conversion of 7-carboxy-7-deazaguanine (CDG) to 7-cyano-7-deazaguanine (preQ(0)). The chain is 7-cyano-7-deazaguanine synthase from Persephonella marina (strain DSM 14350 / EX-H1).